The following is a 237-amino-acid chain: Class B acid phosphatase (237 aa).

The signal sequence occupies residues M1–A23. D69 functions as the Nucleophile in the catalytic mechanism. Mg(2+) is bound by residues D69 and D71. Catalysis depends on D71, which acts as the Proton donor. Substrate contacts are provided by residues T137–G138 and K177. A Mg(2+)-binding site is contributed by D192.

It belongs to the class B bacterial acid phosphatase family. As to quaternary structure, homotetramer. It depends on Mg(2+) as a cofactor.

The protein localises to the periplasm. It catalyses the reaction a phosphate monoester + H2O = an alcohol + phosphate. Functionally, dephosphorylates several organic phosphate monoesters. Also has a phosphotransferase activity catalyzing the transfer of low-energy phosphate groups from organic phosphate monoesters to free hydroxyl groups of various organic compounds. The polypeptide is Class B acid phosphatase (Rahnella sp. (strain Y9602)).